We begin with the raw amino-acid sequence, 576 residues long: MAGUK p55 subfamily member 7 (576 aa).

L27 domains lie at 10–64 (SEMG…EDCA) and 65–122 (PTPV…YDPE). Residues 139–220 (IIRLVKNKEP…AITFKVVPGI (82 aa)) enclose the PDZ domain. The 71-residue stretch at 228 to 298 (EPKMFIKALF…PSKHFQERRL (71 aa)) folds into the SH3 domain. Residues 368–560 (HRLVVLVGPT…AFSELKQALK (193 aa)) enclose the Guanylate kinase-like domain.

The protein belongs to the MAGUK family.

The protein localises to the membrane. Its subcellular location is the cell junction. The protein resides in the tight junction. It is found in the adherens junction. Acts as an important adapter that promotes epithelial cell polarity and tight junction formation. Involved in the assembly of protein complexes at sites of cell-cell contact. The chain is MAGUK p55 subfamily member 7 (mpp7) from Danio rerio (Zebrafish).